The chain runs to 196 residues: Glycerol-3-phosphate acyltransferase (196 aa).

4 helical membrane-spanning segments follow: residues 4–24, 80–100, 114–134, and 155–175; these read LTLL…AVVI, PFFL…PLYF, AMFP…LLVF, and AYWI…LILW.

It belongs to the PlsY family. In terms of assembly, probably interacts with PlsX.

Its subcellular location is the cell inner membrane. The enzyme catalyses an acyl phosphate + sn-glycerol 3-phosphate = a 1-acyl-sn-glycero-3-phosphate + phosphate. The protein operates within lipid metabolism; phospholipid metabolism. Functionally, catalyzes the transfer of an acyl group from acyl-phosphate (acyl-PO(4)) to glycerol-3-phosphate (G3P) to form lysophosphatidic acid (LPA). This enzyme utilizes acyl-phosphate as fatty acyl donor, but not acyl-CoA or acyl-ACP. The protein is Glycerol-3-phosphate acyltransferase of Idiomarina loihiensis (strain ATCC BAA-735 / DSM 15497 / L2-TR).